A 555-amino-acid chain; its full sequence is Alpha-1,2-mannosyltransferase ALG9 (555 aa).

The Cytoplasmic portion of the chain corresponds to 1 to 7 (MNCKAVT). The helical transmembrane segment at 8–28 (ISLLLLLFLTRVYIQPTFSLI) threads the bilayer. The Lumenal segment spans residues 29-62 (SDCDETFNYWEPLNLLVRGFGKQTWEYSPEYSIR). A helical transmembrane segment spans residues 63-83 (SWAFLLPFYCILYPVNKFTDL). At 84-86 (ESH) the chain is on the cytoplasmic side. Residues 87–107 (WNFFITRACLGFFSFIMEFKL) form a helical membrane-spanning segment. The Lumenal portion of the chain corresponds to 108–113 (HREIAG). The chain crosses the membrane as a helical span at residues 114-134 (SLALQIANIWIIFQLFNPGWF). Residues 135 to 176 (HASVELLPSAVAMLLYVGATRHSLRYLSTGSTSNFTKSLAYN) are Cytoplasmic-facing. A helical transmembrane segment spans residues 177-197 (FLASILGWPFVLILSLPLCLH). Topologically, residues 198 to 213 (YLFNHRIISTIRTAFD) are lumenal. Residues 214-234 (CCLIFSLTAFAVIVTDSIFYG) traverse the membrane as a helical segment. Over 235-268 (KLAPVSWNILFYNVINASEESGPNIFGVEPWYYY) the chain is Cytoplasmic. A helical transmembrane segment spans residues 269 to 289 (PLNLLLNFPLPVLVLAILGIF). The Lumenal segment spans residues 290–316 (HLRLWPLWASLFTWIAVFTQQPHKEER). The chain crosses the membrane as a helical span at residues 317–337 (FLYPIYGLITLSASIAFYKVL). Residues 338–349 (NLFNRKPILKKG) lie on the Cytoplasmic side of the membrane. The helical transmembrane segment at 350-370 (IKLSVLLIVAGQAMSRIVALV) threads the bilayer. Over 371–555 (NNYTAPIAVY…LFEKPTETTN (185 aa)) the chain is Lumenal.

Belongs to the glycosyltransferase 22 family.

It localises to the endoplasmic reticulum membrane. The enzyme catalyses an alpha-D-Man-(1-&gt;2)-alpha-D-Man-(1-&gt;2)-alpha-D-Man-(1-&gt;3)-[alpha-D-Man-(1-&gt;3)-alpha-D-Man-(1-&gt;6)]-beta-D-Man-(1-&gt;4)-beta-D-GlcNAc-(1-&gt;4)-alpha-D-GlcNAc-diphospho-di-trans,poly-cis-dolichol + a di-trans,poly-cis-dolichyl beta-D-mannosyl phosphate = an alpha-D-Man-(1-&gt;2)-alpha-D-Man-(1-&gt;2)-alpha-D-Man-(1-&gt;3)-[alpha-D-Man-(1-&gt;2)-alpha-D-Man-(1-&gt;3)-alpha-D-Man-(1-&gt;6)]-beta-D-Man-(1-&gt;4)-beta-D-GlcNAc-(1-&gt;4)-alpha-D-GlcNAc-diphospho-di-trans,poly-cis-dolichol + a di-trans,poly-cis-dolichyl phosphate + H(+). It carries out the reaction an alpha-D-Man-(1-&gt;2)-alpha-D-Man-(1-&gt;2)-alpha-D-Man-(1-&gt;3)-[alpha-D-Man-(1-&gt;2)-alpha-D-Man-(1-&gt;3)-[alpha-D-Man-(1-&gt;6)]-alpha-D-Man-(1-&gt;6)]-beta-D-Man-(1-&gt;4)-beta-D-GlcNAc-(1-&gt;4)-alpha-D-GlcNAc-diphospho-di-trans,poly-cis-dolichol + a di-trans,poly-cis-dolichyl beta-D-mannosyl phosphate = an alpha-D-Man-(1-&gt;2)-alpha-D-Man-(1-&gt;2)-alpha-D-Man-(1-&gt;3)-[alpha-D-Man-(1-&gt;2)-alpha-D-Man-(1-&gt;3)-[alpha-D-Man-(1-&gt;2)-alpha-D-Man-(1-&gt;6)]-alpha-D-Man-(1-&gt;6)]-beta-D-Man-(1-&gt;4)-beta-D-GlcNAc-(1-&gt;4)-alpha-D-GlcNAc-diphospho-di-trans,poly-cis-dolichol + a di-trans,poly-cis-dolichyl phosphate + H(+). Its pathway is protein modification; protein glycosylation. Its function is as follows. Mannosyltransferase that operates in the biosynthetic pathway of dolichol-linked oligosaccharides, the glycan precursors employed in protein asparagine (N)-glycosylation. The assembly of dolichol-linked oligosaccharides begins on the cytosolic side of the endoplasmic reticulum membrane and finishes in its lumen. The sequential addition of sugars to dolichol pyrophosphate produces dolichol-linked oligosaccharides containing fourteen sugars, including two GlcNAcs, nine mannoses and three glucoses. Once assembled, the oligosaccharide is transferred from the lipid to nascent proteins by oligosaccharyltransferases. In the lumen of the endoplasmic reticulum, catalyzes the addition of the seventh and ninth alpha-1,2-linked mannose residues to Man(6)GlcNAc(2)-PP-dolichol and Man(8)GlcNAc(2)-PP-dolichol respectively. This is Alpha-1,2-mannosyltransferase ALG9 (ALG9) from Saccharomyces cerevisiae (strain ATCC 204508 / S288c) (Baker's yeast).